The primary structure comprises 258 residues: Very-long-chain aldehyde decarbonylase GL1-9 (258 aa).

The next 5 helical transmembrane spans lie at 13-33 (MGTFAPIALYWVYAGGYQLVL), 63-83 (GVLLQQLVQAIVAMILFMVTS), 88-108 (VVVQPPIIIQAFQFLVAMLVM), 149-169 (PLEGLLLDTVGGAISFLVSGM), and 175-195 (VFFFCFAVLKTVDDHCGLWLP). The region spanning 101–237 (FLVAMLVMDS…FSIWDRILGT (137 aa)) is the Fatty acid hydroxylase domain.

Belongs to the sterol desaturase family. Homodimer.

The protein resides in the endoplasmic reticulum membrane. It catalyses the reaction a long-chain fatty aldehyde + 2 NADPH + O2 + H(+) = a long-chain alkane + formate + 2 NADP(+) + H2O. Aldehyde decarbonylase involved in the conversion of aldehydes to alkanes. Core component of a very-long-chain alkane synthesis complex. This chain is Very-long-chain aldehyde decarbonylase GL1-9, found in Oryza sativa subsp. indica (Rice).